A 267-amino-acid polypeptide reads, in one-letter code: Glucosamine-6-phosphate deaminase (267 aa).

The Proton acceptor; for enolization step role is filled by D72. D141 functions as the For ring-opening step in the catalytic mechanism. H143 acts as the Proton acceptor; for ring-opening step in catalysis. The active-site For ring-opening step is the E148.

It belongs to the glucosamine/galactosamine-6-phosphate isomerase family. NagB subfamily. As to quaternary structure, homohexamer.

It carries out the reaction alpha-D-glucosamine 6-phosphate + H2O = beta-D-fructose 6-phosphate + NH4(+). It participates in amino-sugar metabolism; N-acetylneuraminate degradation; D-fructose 6-phosphate from N-acetylneuraminate: step 5/5. With respect to regulation, allosterically activated by N-acetylglucosamine 6-phosphate (GlcNAc6P). Catalyzes the reversible isomerization-deamination of glucosamine 6-phosphate (GlcN6P) to form fructose 6-phosphate (Fru6P) and ammonium ion. In Actinobacillus pleuropneumoniae serotype 5b (strain L20), this protein is Glucosamine-6-phosphate deaminase.